Reading from the N-terminus, the 227-residue chain is Small heat shock protein hspG3 (227 aa).

In terms of domain architecture, sHSP spans 31–227; that stretch reads NKRVDIIPSM…SSNTIKININ (197 aa). Residues 119–164 form a disordered region; that stretch reads QQQQLENSNKENDEPSIEEFEEDVKSKSELNKTTLNTTENKDEDKT.

The protein belongs to the small heat shock protein (HSP20) family.

The protein is Small heat shock protein hspG3 (hspG3) of Dictyostelium discoideum (Social amoeba).